A 78-amino-acid polypeptide reads, in one-letter code: Acyl carrier protein (78 aa).

Positions 2–77 constitute a Carrier domain; it reads SDIAERVKKI…DAIKFLEKNA (76 aa). Position 37 is an O-(pantetheine 4'-phosphoryl)serine (Ser37).

This sequence belongs to the acyl carrier protein (ACP) family. 4'-phosphopantetheine is transferred from CoA to a specific serine of apo-ACP by AcpS. This modification is essential for activity because fatty acids are bound in thioester linkage to the sulfhydryl of the prosthetic group.

It localises to the cytoplasm. The protein operates within lipid metabolism; fatty acid biosynthesis. In terms of biological role, carrier of the growing fatty acid chain in fatty acid biosynthesis. This Xanthobacter autotrophicus (strain ATCC BAA-1158 / Py2) protein is Acyl carrier protein.